We begin with the raw amino-acid sequence, 110 residues long: uncharacterized protein (110 aa).

Disordered regions lie at residues 1-41 (MEWG…ERAQ) and 65-110 (LRQL…ASES). A coiled-coil region spans residues 38–68 (ERAQQLLDAVEQRQRQLLDTIAACEEMLRQL).

This is an uncharacterized protein from Mus musculus (Mouse).